A 699-amino-acid polypeptide reads, in one-letter code: Serine/threonine-protein kinase PRR2 (699 aa).

Residues 168–193 form a disordered region; sequence SSTKKNLANDISDNKHNNNSSNTIGH. A compositionally biased stretch (polar residues) spans 184 to 193; sequence NNNSSNTIGH. A Protein kinase domain is found at 361–653; the sequence is RDLDVVLGEG…INGILQDGWI (293 aa). Residues 367–375 and K390 each bind ATP; that span reads LGEGSGGKV. D484 serves as the catalytic Proton acceptor.

The protein belongs to the protein kinase superfamily. Ser/Thr protein kinase family.

The enzyme catalyses L-seryl-[protein] + ATP = O-phospho-L-seryl-[protein] + ADP + H(+). It carries out the reaction L-threonyl-[protein] + ATP = O-phospho-L-threonyl-[protein] + ADP + H(+). Functionally, protein kinase that functions as a regulator in the pheromone-induced mating pathway downstream of mitogen-activated protein kinase (MAPK) FUS3. Diminishes transcriptional induction of genes in response to pheromone signaling. This Saccharomyces cerevisiae (strain ATCC 204508 / S288c) (Baker's yeast) protein is Serine/threonine-protein kinase PRR2 (PRR2).